Here is a 466-residue protein sequence, read N- to C-terminus: Glutamate decarboxylase beta (466 aa).

Residues T62 and N83 each contribute to the substrate site. Residues 126–127 (SS), T212, and H275 each bind pyridoxal 5'-phosphate. Position 276 is an N6-(pyridoxal phosphate)lysine (K276). K446, K453, and K464 each carry N6-acetyllysine.

This sequence belongs to the group II decarboxylase family. In terms of assembly, homohexamer composed of three dimers. Pyridoxal 5'-phosphate serves as cofactor.

The enzyme catalyses L-glutamate + H(+) = 4-aminobutanoate + CO2. Its function is as follows. Converts glutamate to gamma-aminobutyrate (GABA), consuming one intracellular proton in the reaction. The gad system helps to maintain a near-neutral intracellular pH when cells are exposed to extremely acidic conditions. The ability to survive transit through the acidic conditions of the stomach is essential for successful colonization of the mammalian host by commensal and pathogenic bacteria. The chain is Glutamate decarboxylase beta (gadB) from Shigella flexneri.